The chain runs to 205 residues: HTH-type transcriptional regulator LuxR (205 aa).

The region spanning 15 to 75 (LKRKQQLMEI…EVLNHVVRQF (61 aa)) is the HTH tetR-type domain. The H-T-H motif DNA-binding region spans 39 to 58 (HADIAEIAQVSVATVFNYFP).

Functionally, regulatory protein of bacterial bioluminescence. It probably binds the autoinducer molecule and potentiates the transcription of the bioluminescence operon. This is HTH-type transcriptional regulator LuxR (luxR) from Vibrio harveyi (Beneckea harveyi).